The chain runs to 221 residues: uncharacterized protein (221 aa).

The signal sequence occupies residues 1–23 (MNKLIQLALFFTLMLTGCSNSST). The interval 67 to 221 (ELGKRKAKEE…QGYIDPEDAP (155 aa)) is disordered. Positions 68 to 150 (LGKRKAKEEA…EQKANAEKKR (83 aa)) are enriched in basic and acidic residues. A coiled-coil region spans residues 70 to 161 (KRKAKEEAEK…SQAQRQQTEA (92 aa)). Residues 152–161 (SQAQRQQTEA) show a composition bias toward polar residues. The span at 162–174 (PSSNSQDPPSSSS) shows a compositional bias: low complexity. Residues 175-184 (QTDKTIQQPA) are compositionally biased toward polar residues. Positions 195–205 (YEERKKWHDDQ) are enriched in basic and acidic residues.

This is an uncharacterized protein from Bacillus subtilis (strain 168).